Here is a 360-residue protein sequence, read N- to C-terminus: Phospho-N-acetylmuramoyl-pentapeptide-transferase (360 aa).

Helical transmembrane passes span 27–47, 73–93, 94–114, 132–152, 168–188, 199–219, 236–256, 263–283, 288–308, and 338–358; these read IVSLLTALVISLWMGPHMIAW, TMGGVMILVAIIVSVLMWANL, SNPYVWCVLLVLAGYGAVGFV, WKYFWQSVIALVVAFTMYSIG, VMPQLGLLYVALAYFVIVGTS, GLAIMPTVFVAAGFALVAWAT, ASELVIVCTAIVGAGLGFLWF, VFMGDVGSLALGGALGTIAVL, FLLVIMGGVFVVETLSVILQV, and VIVRFWIISLMLVLIGLATLK.

The protein belongs to the glycosyltransferase 4 family. MraY subfamily. Mg(2+) is required as a cofactor.

It localises to the cell inner membrane. It catalyses the reaction UDP-N-acetyl-alpha-D-muramoyl-L-alanyl-gamma-D-glutamyl-meso-2,6-diaminopimeloyl-D-alanyl-D-alanine + di-trans,octa-cis-undecaprenyl phosphate = di-trans,octa-cis-undecaprenyl diphospho-N-acetyl-alpha-D-muramoyl-L-alanyl-D-glutamyl-meso-2,6-diaminopimeloyl-D-alanyl-D-alanine + UMP. Its pathway is cell wall biogenesis; peptidoglycan biosynthesis. Functionally, catalyzes the initial step of the lipid cycle reactions in the biosynthesis of the cell wall peptidoglycan: transfers peptidoglycan precursor phospho-MurNAc-pentapeptide from UDP-MurNAc-pentapeptide onto the lipid carrier undecaprenyl phosphate, yielding undecaprenyl-pyrophosphoryl-MurNAc-pentapeptide, known as lipid I. The sequence is that of Phospho-N-acetylmuramoyl-pentapeptide-transferase from Pectobacterium atrosepticum (strain SCRI 1043 / ATCC BAA-672) (Erwinia carotovora subsp. atroseptica).